The primary structure comprises 142 residues: Hemoglobin subunit alpha (142 aa).

In terms of domain architecture, Globin spans 1-142 (VLSAADKNNV…VSTVLTSKYR (142 aa)). Phosphoserine is present on Ser3. An N6-succinyllysine mark is found at Lys7 and Lys11. Position 16 is an N6-acetyllysine; alternate (Lys16). Lys16 is modified (N6-succinyllysine; alternate). A Phosphotyrosine modification is found at Tyr24. Ser35 is modified (phosphoserine). Lys40 bears the N6-succinyllysine mark. Residue His58 coordinates O2. Heme b is bound at residue His87. Phosphoserine is present on Ser102. At Thr108 the chain carries Phosphothreonine. Ser125 is subject to Phosphoserine. A phosphothreonine mark is found at Thr135 and Thr138. Ser139 bears the Phosphoserine mark.

This sequence belongs to the globin family. In terms of assembly, heterotetramer of two alpha chains and two beta chains. In terms of tissue distribution, red blood cells.

Involved in oxygen transport from the lung to the various peripheral tissues. In terms of biological role, hemopressin acts as an antagonist peptide of the cannabinoid receptor CNR1. Hemopressin-binding efficiently blocks cannabinoid receptor CNR1 and subsequent signaling. The protein is Hemoglobin subunit alpha (HBA) of Procavia capensis habessinica (Abyssinian hyrax).